Reading from the N-terminus, the 25-residue chain is ATP synthase subunit alpha, mitochondrial (25 aa).

This sequence belongs to the ATPase alpha/beta chains family. In terms of assembly, F-type ATPases have 2 components, CF(1) - the catalytic core - and CF(0) - the membrane proton channel. CF(1) has five subunits: alpha(3), beta(3), gamma(1), delta(1), epsilon(1). CF(0) has three main subunits: a, b and c.

It is found in the mitochondrion. Its subcellular location is the mitochondrion inner membrane. Functionally, mitochondrial membrane ATP synthase (F(1)F(0) ATP synthase or Complex V) produces ATP from ADP in the presence of a proton gradient across the membrane which is generated by electron transport complexes of the respiratory chain. F-type ATPases consist of two structural domains, F(1) - containing the extramembraneous catalytic core, and F(0) - containing the membrane proton channel, linked together by a central stalk and a peripheral stalk. During catalysis, ATP synthesis in the catalytic domain of F(1) is coupled via a rotary mechanism of the central stalk subunits to proton translocation. Subunits alpha and beta form the catalytic core in F(1). Rotation of the central stalk against the surrounding alpha(3)beta(3) subunits leads to hydrolysis of ATP in three separate catalytic sites on the beta subunits. Subunit alpha does not bear the catalytic high-affinity ATP-binding sites. This Spinacia oleracea (Spinach) protein is ATP synthase subunit alpha, mitochondrial (ATPA).